Reading from the N-terminus, the 331-residue chain is Glucokinase (331 aa).

Position 16–21 (16–21 (GDIGGT)) interacts with ATP.

Belongs to the bacterial glucokinase family.

The protein localises to the cytoplasm. It carries out the reaction D-glucose + ATP = D-glucose 6-phosphate + ADP + H(+). The polypeptide is Glucokinase (Pseudomonas aeruginosa (strain LESB58)).